The primary structure comprises 642 residues: Threonine--tRNA ligase (642 aa).

The region spanning 1–61 (MPVIRFYDGS…REDAFIEFVD (61 aa)) is the TGS domain. The tract at residues 243-534 (DHRKIGKFLQ…LIEECSGNLP (292 aa)) is catalytic. Zn(2+) is bound by residues cysteine 334, histidine 385, and histidine 511.

This sequence belongs to the class-II aminoacyl-tRNA synthetase family. Homodimer. The cofactor is Zn(2+).

The protein localises to the cytoplasm. It carries out the reaction tRNA(Thr) + L-threonine + ATP = L-threonyl-tRNA(Thr) + AMP + diphosphate + H(+). Its function is as follows. Catalyzes the attachment of threonine to tRNA(Thr) in a two-step reaction: L-threonine is first activated by ATP to form Thr-AMP and then transferred to the acceptor end of tRNA(Thr). Also edits incorrectly charged L-seryl-tRNA(Thr). The chain is Threonine--tRNA ligase from Buchnera aphidicola subsp. Acyrthosiphon pisum (strain APS) (Acyrthosiphon pisum symbiotic bacterium).